We begin with the raw amino-acid sequence, 154 residues long: 17 kDa surface antigen (154 aa).

The first 19 residues, 1-19, serve as a signal peptide directing secretion; the sequence is MKLLSKIMIIALAASTLQA. A lipid anchor (N-palmitoyl cysteine) is attached at C20. The S-diacylglycerol cysteine moiety is linked to residue C20.

The protein belongs to the rickettsiale 17 kDa surface antigen family.

The protein localises to the cell outer membrane. The sequence is that of 17 kDa surface antigen (omp) from Rickettsia amblyommatis (Rickettsia amblyommii).